The following is a 228-amino-acid chain: MDNNFKIKDLPKNERPQERLIRYGAEVLSNSELLAVILRTGTKNQNIMMLASSLIKETGGLDQLFNQSIEELTKIKGIGVTKAVQILALSELSKRFKTYKSGNEYKINTPLDVSNLVMEDMKYLKQEKLKILILNTKNIVKYIRDVFIGTLNSSIVHPREIFCEAIKKNGASIIICHNHPSGDPTPSKEDINITLRLKECGKLIGIDLLDHIIIGENKYVSMKEKGTI.

The 123-residue stretch at Lys106 to Ile228 folds into the MPN domain. Zn(2+) contacts are provided by His177, His179, and Asp190. The JAMM motif motif lies at His177–Asp190.

It belongs to the UPF0758 family.

The sequence is that of UPF0758 protein CLI_3057 from Clostridium botulinum (strain Langeland / NCTC 10281 / Type F).